The primary structure comprises 135 residues: Transcription antitermination protein NusB (135 aa).

It belongs to the NusB family.

Involved in transcription antitermination. Required for transcription of ribosomal RNA (rRNA) genes. Binds specifically to the boxA antiterminator sequence of the ribosomal RNA (rrn) operons. This is Transcription antitermination protein NusB from Nocardioides sp. (strain ATCC BAA-499 / JS614).